Here is a 230-residue protein sequence, read N- to C-terminus: Large ribosomal subunit protein uL4 (230 aa).

Residues 51 to 105 (RAAARQGTHSTKTRGDVSGGGRKPYRQKGTGRARQGSMRAPQFTGGGIVHGPKLR) are disordered.

It belongs to the universal ribosomal protein uL4 family. As to quaternary structure, part of the 50S ribosomal subunit.

Functionally, one of the primary rRNA binding proteins, this protein initially binds near the 5'-end of the 23S rRNA. It is important during the early stages of 50S assembly. It makes multiple contacts with different domains of the 23S rRNA in the assembled 50S subunit and ribosome. Its function is as follows. Forms part of the polypeptide exit tunnel. This Mycobacterium leprae (strain Br4923) protein is Large ribosomal subunit protein uL4.